The primary structure comprises 284 residues: uncharacterized protein (284 aa).

Q54 is a binding site for FMN. The active-site Proton donor is the C83. Residues K125, H153, 183 to 185 (NGG), and 207 to 208 (AN) contribute to the FMN site.

The protein belongs to the Dus family. FMN is required as a cofactor.

In terms of biological role, catalyzes the synthesis of dihydrouridine, a modified base found in the D-loop of most tRNAs. This is an uncharacterized protein from Caenorhabditis elegans.